A 293-amino-acid chain; its full sequence is EID1-like F-box protein 1 (293 aa).

An F-box domain is found at Gln16–Ala68. The disordered stretch occupies residues Ala245–Gln293. Residues Asp250 to Asp259 show a composition bias toward basic and acidic residues.

This chain is EID1-like F-box protein 1 (EDL1), found in Arabidopsis thaliana (Mouse-ear cress).